Reading from the N-terminus, the 329-residue chain is Putative ubiquitin thioesterase otu1 (329 aa).

The segment at 7–89 (RLKYENQSAV…ATSFSTNEPA (83 aa)) is UBX-like. The interval 85-127 (TNEPAKPPIPNAATKPTFPPQTEISNPPAVSHQSKNTSQDPPY) is disordered. Polar residues predominate over residues 115-124 (SHQSKNTSQD). The 120-residue stretch at 135–254 (IALRVMPDDN…GIHYDLAALA (120 aa)) folds into the OTU domain. Residues 140–146 (MPDDNSC) are cys-loop. Residue aspartate 143 is part of the active site. Cysteine 146 serves as the catalytic Nucleophile. The interval 193–203 (IRKETSWGGYI) is variable-loop. The interval 243–247 (YSGIH) is his-loop. Isoleucine 246 is a substrate binding site. Residue histidine 247 is part of the active site. The S2 site stretch occupies residues 272–277 (VTITPY). The segment at 299-323 (IRCTICGTGLVGEKDATAHALATGH) adopts a C2H2-type zinc-finger fold. Residue histidine 323 is part of the active site.

Its subcellular location is the cytoplasm. It localises to the nucleus. The enzyme catalyses Thiol-dependent hydrolysis of ester, thioester, amide, peptide and isopeptide bonds formed by the C-terminal Gly of ubiquitin (a 76-residue protein attached to proteins as an intracellular targeting signal).. Functionally, hydrolase that can remove conjugated ubiquitin from proteins and may therefore play an important regulatory role at the level of protein turnover by preventing degradation. Has a role in meiosis. The sequence is that of Putative ubiquitin thioesterase otu1 (otu1) from Schizosaccharomyces pombe (strain 972 / ATCC 24843) (Fission yeast).